A 138-amino-acid chain; its full sequence is Transcription antitermination protein NusB (138 aa).

The protein belongs to the NusB family.

Functionally, involved in transcription antitermination. Required for transcription of ribosomal RNA (rRNA) genes. Binds specifically to the boxA antiterminator sequence of the ribosomal RNA (rrn) operons. The chain is Transcription antitermination protein NusB from Serratia proteamaculans (strain 568).